Consider the following 215-residue polypeptide: Cytokinin riboside 5'-monophosphate phosphoribohydrolase LOG3 (215 aa).

Substrate-binding positions include glutamate 84, 102 to 103 (RK), 119 to 125 (GYGTLEE), and threonine 131.

It belongs to the LOG family. As to expression, expressed in roots and shoots. Detected in root procambium, lateral root primordia, vascular tissues of immature leaves, axillary buds, style and ovular funiculus.

The protein resides in the cytoplasm. Its subcellular location is the nucleus. It catalyses the reaction N(6)-(dimethylallyl)adenosine 5'-phosphate + H2O = N(6)-dimethylallyladenine + D-ribose 5-phosphate. The catalysed reaction is 9-ribosyl-trans-zeatin 5'-phosphate + H2O = trans-zeatin + D-ribose 5-phosphate. Functionally, cytokinin-activating enzyme working in the direct activation pathway. Phosphoribohydrolase that converts inactive cytokinin nucleotides to the biologically active free-base forms. The sequence is that of Cytokinin riboside 5'-monophosphate phosphoribohydrolase LOG3 (LOG3) from Arabidopsis thaliana (Mouse-ear cress).